The following is a 172-amino-acid chain: 3-hydroxydecanoyl-[acyl-carrier-protein] dehydratase (172 aa).

H71 is a catalytic residue.

The protein belongs to the thioester dehydratase family. FabA subfamily. Homodimer.

The protein resides in the cytoplasm. The catalysed reaction is a (3R)-hydroxyacyl-[ACP] = a (2E)-enoyl-[ACP] + H2O. It catalyses the reaction (3R)-hydroxydecanoyl-[ACP] = (2E)-decenoyl-[ACP] + H2O. It carries out the reaction (2E)-decenoyl-[ACP] = (3Z)-decenoyl-[ACP]. Its pathway is lipid metabolism; fatty acid biosynthesis. Functionally, necessary for the introduction of cis unsaturation into fatty acids. Catalyzes the dehydration of (3R)-3-hydroxydecanoyl-ACP to E-(2)-decenoyl-ACP and then its isomerization to Z-(3)-decenoyl-ACP. Can catalyze the dehydratase reaction for beta-hydroxyacyl-ACPs with saturated chain lengths up to 16:0, being most active on intermediate chain length. This is 3-hydroxydecanoyl-[acyl-carrier-protein] dehydratase from Erwinia tasmaniensis (strain DSM 17950 / CFBP 7177 / CIP 109463 / NCPPB 4357 / Et1/99).